We begin with the raw amino-acid sequence, 426 residues long: UPF0329 protein ECU06_0040 (426 aa).

The span at 136–172 shows a compositional bias: basic and acidic residues; that stretch reads RQRKREEETERSVKELVGDEEKAKSKEEKAKSKEEKA. A disordered region spans residues 136 to 230; that stretch reads RQRKREEETE…GGKKKSKGGR (95 aa). Positions 220–230 are enriched in basic residues; sequence KGGKKKSKGGR.

The protein belongs to the UPF0329 family.

This Encephalitozoon cuniculi (strain GB-M1) (Microsporidian parasite) protein is UPF0329 protein ECU06_0040.